A 28-amino-acid chain; its full sequence is Phospholipase A2 (28 aa).

Gly28 contacts Ca(2+).

Ca(2+) is required as a cofactor. As to expression, expressed by the venom gland.

It localises to the secreted. It catalyses the reaction a 1,2-diacyl-sn-glycero-3-phosphocholine + H2O = a 1-acyl-sn-glycero-3-phosphocholine + a fatty acid + H(+). Functionally, PLA2 catalyzes the calcium-dependent hydrolysis of the 2-acyl groups in 3-sn-phosphoglycerides. This is Phospholipase A2 from Scolopendra dehaani (Thai centipede).